A 334-amino-acid polypeptide reads, in one-letter code: Leucine-rich repeat-containing protein 26 (334 aa).

Positions 1–26 are cleaved as a signal peptide; it reads MRGPSWSRPRPLLLLLLLLSPWPVWA. Residues 27 to 261 lie on the Extracellular side of the membrane; sequence QVSATASPSG…HCAQPLALRD (235 aa). Residues 34–71 enclose the LRRNT domain; sequence PSGSLGAPDCPEVCTCVPGGLASCSALSLPAVPPGLSL. Intrachain disulfides connect Cys43/Cys49 and Cys47/Cys57. LRR repeat units follow at residues 72-93, 96-117, 120-141, 144-167, and 168-190; these read RLRA…AFAG, ALQR…AFWG, ALQL…TFAP, ALRN…GALP, and LLRS…LGRL. Asn147 is a glycosylation site (N-linked (GlcNAc...) asparagine). The LRRCT domain maps to 201–255; the sequence is NPWGCGCALRPLCAWLRRHPLPASEAETVLCVWPGRLTLSPLTAFSDAAFSHCAQ. 2 disulfide bridges follow: Cys205–Cys231 and Cys207–Cys253. Residues 262-282 traverse the membrane as a helical segment; that stretch reads LAVVYTLGPASFLVSLASCLA. Residues 283-334 lie on the Cytoplasmic side of the membrane; that stretch reads LGSGLTACRARRRRLRTAALRPPRPPDPNPDPDPHGCASPADPGSPAAAAQA. The segment at 298 to 334 is disordered; the sequence is RTAALRPPRPPDPNPDPDPHGCASPADPGSPAAAAQA. Residues 304-313 are compositionally biased toward pro residues; sequence PPRPPDPNPD. Low complexity predominate over residues 320 to 334; the sequence is ASPADPGSPAAAAQA.

Interacts with KCNMA1. Isoform 1 is expressed highly in normal prostate and salivary gland, very weakly in colon, pancreas, and intestine, and not at all in other tissues. Isoform 1 is expressed highly in many cancer cell lines and in breast cancer, pancreatic cancer and colon cancer. Isoform 2 is expressed in cancer cell lines.

It is found in the cell membrane. Its subcellular location is the cytoplasm. It localises to the cytoskeleton. In terms of biological role, auxiliary protein of the large-conductance, voltage and calcium-activated potassium channel (BK alpha). Required for the conversion of BK alpha channels from a high-voltage to a low-voltage activated channel type in non-excitable cells. These are characterized by negative membrane voltages and constant low levels of calcium. The chain is Leucine-rich repeat-containing protein 26 (LRRC26) from Homo sapiens (Human).